A 135-amino-acid polypeptide reads, in one-letter code: Ribonuclease VapC5 (135 aa).

The region spanning 9–130 (VLDTSVFIAT…FAALDGAASV (122 aa)) is the PINc domain. Residues Asp-11 and Asp-100 each contribute to the Mg(2+) site.

It belongs to the PINc/VapC protein family. As to quaternary structure, forms a complex with VapB5. The cofactor is Mg(2+).

It localises to the secreted. Functionally, probable toxic component of a type II toxin-antitoxin (TA) system. The cognate antitoxin is VapB5. Has limited RNase activity on substrates; activity is seen with a VapC5-VapB5 complex. This Mycobacterium tuberculosis (strain ATCC 25618 / H37Rv) protein is Ribonuclease VapC5.